A 202-amino-acid chain; its full sequence is Small ribosomal subunit protein uS5 (202 aa).

In terms of domain architecture, S5 DRBM spans 42–105 (LKDEVLKIMP…ILAKLSIVPV (64 aa)). The residue at position 192 (Thr-192) is a Phosphothreonine.

The protein belongs to the universal ribosomal protein uS5 family. As to quaternary structure, component of the small ribosomal subunit. Interacts with zinc finger protein ZNF277 (via zinc-finger domains); the interaction is direct; the interaction is extra-ribosomal. Interaction with ZNF277 competes with the binding of RPS2 to protein arginine methyltransferase PRMT3. In terms of processing, citrullinated by PADI4 in the Arg/Gly-rich region. Asymmetric arginine dimethylation by PRMT3 occurs at multiple sites in the Arg/Gly-rich region. Post-translationally, monoubiquitinated by RNF10 when a ribosome has stalled during translation, leading to its degradation by the proteasome. Deubiquitinated by USP10, preventing degradation by the proteasome and promoting 40S ribosome subunit recycling following ribosome dissociation.

Its subcellular location is the cytoplasm. The protein localises to the nucleus. The protein resides in the nucleolus. Functionally, component of the ribosome, a large ribonucleoprotein complex responsible for the synthesis of proteins in the cell. The small ribosomal subunit (SSU) binds messenger RNAs (mRNAs) and translates the encoded message by selecting cognate aminoacyl-transfer RNA (tRNA) molecules. The large subunit (LSU) contains the ribosomal catalytic site termed the peptidyl transferase center (PTC), which catalyzes the formation of peptide bonds, thereby polymerizing the amino acids delivered by tRNAs into a polypeptide chain. The nascent polypeptides leave the ribosome through a tunnel in the LSU and interact with protein factors that function in enzymatic processing, targeting, and the membrane insertion of nascent chains at the exit of the ribosomal tunnel. Plays a role in the assembly and function of the 40S ribosomal subunit. Mutations in this protein affects the control of translational fidelity. Involved in nucleolar processing of pre-18S ribosomal RNA and ribosome assembly. The protein is Small ribosomal subunit protein uS5 (RPS2) of Cricetulus griseus (Chinese hamster).